Consider the following 255-residue polypeptide: Triosephosphate isomerase (255 aa).

Residue Asn10–Lys12 participates in substrate binding. His96 functions as the Electrophile in the catalytic mechanism. Glu168 acts as the Proton acceptor in catalysis. Residues Gly174, Ser213, and Gly234 to Gly235 contribute to the substrate site.

The protein belongs to the triosephosphate isomerase family. Homodimer.

It is found in the cytoplasm. The enzyme catalyses D-glyceraldehyde 3-phosphate = dihydroxyacetone phosphate. Its pathway is carbohydrate biosynthesis; gluconeogenesis. The protein operates within carbohydrate degradation; glycolysis; D-glyceraldehyde 3-phosphate from glycerone phosphate: step 1/1. Its function is as follows. Involved in the gluconeogenesis. Catalyzes stereospecifically the conversion of dihydroxyacetone phosphate (DHAP) to D-glyceraldehyde-3-phosphate (G3P). The polypeptide is Triosephosphate isomerase (Histophilus somni (strain 2336) (Haemophilus somnus)).